Here is a 100-residue protein sequence, read N- to C-terminus: Small ribosomal subunit protein uS14c (100 aa).

Belongs to the universal ribosomal protein uS14 family. Part of the 30S ribosomal subunit.

It localises to the plastid. It is found in the chloroplast. Functionally, binds 16S rRNA, required for the assembly of 30S particles. The polypeptide is Small ribosomal subunit protein uS14c (Carica papaya (Papaya)).